The following is a 38-amino-acid chain: U9-ctenitoxin-Pk1a (38 aa).

4 disulfides stabilise this stretch: C2–C17, C9–C22, C16–C36, and C24–C34.

As to expression, expressed by the venom gland.

It localises to the secreted. In Phoneutria keyserlingi (Brazilian wandering spider), this protein is U9-ctenitoxin-Pk1a.